The following is a 144-amino-acid chain: Large-conductance mechanosensitive channel (144 aa).

2 consecutive transmembrane segments (helical) span residues 16–36 (VIDLAVGVIIGAAFGKIVDSV) and 86–106 (GNFLTIVVNFVILAFIIFMMV).

The protein belongs to the MscL family. Homopentamer.

It is found in the cell inner membrane. Its function is as follows. Channel that opens in response to stretch forces in the membrane lipid bilayer. May participate in the regulation of osmotic pressure changes within the cell. In Cupriavidus metallidurans (strain ATCC 43123 / DSM 2839 / NBRC 102507 / CH34) (Ralstonia metallidurans), this protein is Large-conductance mechanosensitive channel.